The following is a 183-amino-acid chain: A-type ATP synthase subunit E (183 aa).

It belongs to the V-ATPase E subunit family. As to quaternary structure, has multiple subunits with at least A(3), B(3), C, D, E, F, H, I and proteolipid K(x).

The protein localises to the cell membrane. Component of the A-type ATP synthase that produces ATP from ADP in the presence of a proton gradient across the membrane. The sequence is that of A-type ATP synthase subunit E from Methanosarcina barkeri (strain Fusaro / DSM 804).